The sequence spans 130 residues: Small ribosomal subunit protein uS8 (130 aa).

Belongs to the universal ribosomal protein uS8 family. Part of the 30S ribosomal subunit. Contacts proteins S5 and S12.

One of the primary rRNA binding proteins, it binds directly to 16S rRNA central domain where it helps coordinate assembly of the platform of the 30S subunit. This is Small ribosomal subunit protein uS8 from Onion yellows phytoplasma (strain OY-M).